A 269-amino-acid chain; its full sequence is MEMO1 family protein TV1383 (269 aa).

Belongs to the MEMO1 family.

The sequence is that of MEMO1 family protein TV1383 from Thermoplasma volcanium (strain ATCC 51530 / DSM 4299 / JCM 9571 / NBRC 15438 / GSS1).